The chain runs to 401 residues: Rho-N domain-containing protein 1, chloroplastic (401 aa).

The N-terminal 63 residues, 1–63 (MAMSGTFHLT…VPNRSSFVCR (63 aa)), are a transit peptide targeting the chloroplast. Disordered stretches follow at residues 73-129 (PDFS…PGPR) and 180-361 (KHSG…EEAV). Polar residues-rich tracts occupy residues 102-126 (DMLS…TSSP), 210-223 (TGNL…DNNA), and 240-265 (PRSQ…VTWT). The span at 266 to 290 (QKKDTVELHDEPEHEPAYEHEHEPE) shows a compositional bias: basic and acidic residues. Residues 339 to 358 (LSDDDESLDDADEDSDEAEE) are compositionally biased toward acidic residues. The stretch at 339-371 (LSDDDESLDDADEDSDEAEEEAVKDLSELKLVE) forms a coiled coil.

As to quaternary structure, homodimer or homomultimer. Part of a chloroplastic degradosome-like complex. Interacts with RNE.

It localises to the plastid. The protein resides in the chloroplast. Its function is as follows. Binds to and supports processing of specific plastid RNAs. Associates via its C-terminal Rho-N domain to single stranded regions of 16S and 23S rRNAs or to rbcL mRNAs. May be involved in targeting transcripts to RNases such as RNE or RNase J. This Arabidopsis thaliana (Mouse-ear cress) protein is Rho-N domain-containing protein 1, chloroplastic (RHON1).